The chain runs to 15281 residues: MGAIGQDMAYDRLANPSRASSISSNRYSEPVEQSFAQGRLWFLHQLKLGASWDITPAAIRLRGHLDIDALNAASRALTQRHETLRTTFKEQDGVGVQVVHASGLERGLRIVDASSRDLAQLLAEEQTMKFDLESEPAWRVALLKVAEDHHILSIVVHHIISDSRSLDIIQQELGELYTAASQGKSISACPLGPIPIQYRDLTTWQNQDEQVAEQERQLGYWIEQLDNNTPAELLTELPRPAIPSGETGKISFQIDGSVHKELLAFCRSQQVTAYAVLLAAFRVAHFRLTGAEDATIGAPVANRDRPELENMVAPLATLQCMRVVLDEDDTFESVLRQIMSVMTEAHANRDVPFERIVSALLPGSTDTSRHPLVQLMFALHPAQDTGRARWGFLEAETLQSAAPTRFDMEMHLFEGDDRFDANVLFSTGLFDAEAIRSVVSIFREVLRRGISEPAVHVKTMPLTDGLAAIRDMGLLDIGTTDYPREASVVDMFQEQVALNPSATAVADASSRLSYSELDHKSDQLAAWLRRRQLKPETLIGVLSPPSCETMVSFLGILKAHLAYLPLDINVPLARIESILSAVDGHKLVLLGSNVPQPKVDVPDVELLRISDALNGSQVNGLAGKQATAKPSATDLAYVIFTSGSTGKPKGVMIEHRGIVRLVKGTNIISPAQAAVPTAHLANIAFDLSTWEIYTPILNGGTLVCIEHSVTLDSKALEAVFTKEGIRVAFLAPALIKQCLADRPAIFAGLDSLYAIGDRFDRRDALHAKSLVKHGVYNAYGPTENSVVSTIYSVSEASPFVTGVPVGRAISNSGAYVMDQDQQLVSPGVMGELVVSGDGLARGYTDSALDKNRFVVVQIDGESIRGYRTGDRARYSLKGGQIEFFGRMDQQVKIRGHRIEPAEVEHALLNSDQVRDAAVVIRRQEEEEPAMIAFVTTQGTLPDHLVNINGNGHVPDGNGSKNDQFAVHVESELRRRLQMLLPSYMMPARIVVLDHLPLNPNGKVDRKALGQSAKTVQKSKLVSQRVAPRNEIEAVLCEEYRSVLGVEVGITDNFFDLGGHSLTAMKLAARISQRLDIQASVATVFEQPMLADLAATIQRGSTLYSVIPTTEYTGPVEQSFAQGRLWFLEQLNTGASWYNVMLTVRLRGHLDVDALGTALLALEKRHETLRTTFEERDGVGMQVVHSSLMGELRLIDISEKSGTAAHEALMKEQSTRFDLTREPGWRVALLKLADHHIFSIVMHHIVSDGWSLDLLRHELGQLYSAALRGQDPLSRLEPLPIQYRDFAVWQKQDSQQKAAHQRQLEYWTKQLADSTPAELLTDFPRPSILSGKAGKVPVAIEGSLYDTLQVFSRTHQVTSFAVLLAAFRAAHFRLTGSDNATIGVPSANRNRPELENVIGFFVNTQCIRITIDENDNFESLVRQVRSTTTAAQDNQDVPFEQVVSSLMPSSSRDASRNPLVQLMFALHGQQDLFKIQLEGTEEEVIPTEEVTRFDIEFHLYQGASKLSGDIIFAADLFEAETIRGVVSVFQEVLRRGLQQPQTPIMTMPLTDGIPELERMGLLHMVKTDYPRNMSVVDVFQQQVRLSAEATAVIDSSSRMSYAELDQRSDQVAAWLRQRQLPAETFVAVLAPRSCEAVIALFGILKAGHAYLPLDVNVPAARLRAILAEVKGEKLVLLGAGEPSPEGQSPEVSIVRIADATSPAGHASLRDGKSKPTAGSLAYVIFTSGSTGKPKGVMIEHRGVLRLVKQTNILSSLPPAQTFRMAHMSNLAFDASIWEVFTALLNGGSLVCIDRFTILDAQALEALFLREHINIALFPPALLKQCLTDAAATIKSLDLLYVGGDRLDTADAALAKALVKSEVYNAYGPTENTVMSTLYSIADTERFVNGVPIGRAVSNSGVYVMDQNQQLVPLGVMGELVVTGDGLARGYTNPALDSDRFVDVIARGQLLRAYRTGDRARYRPKDGQVEFFGRMDHQVKVRGHRIELAEVEHALLSSAGVHDAVVVSNSQEDNQGVEMVAFITAQDNETLQEAQSSNQVQEWESHFETTAYADITAIDQNTLGRDFTSWTSMYDGTLIDKREMQEWLDDTMRTFLDGQAAGHVLEIGTGTGMVLFNLGQAGLKSYIGLEPSQSAVQFVNKAAQTFPGLEGKAQVHVGTAMDTGRLSALSPDLIVINSVAQYFPSREYLAEVVEALVRIPGVRRIFFGDMRTYATHKDFLVARAVHTNGSKVTRSKVQQEVARLEELEEELLVDPAFFTSLKESLSEEIEHVEILPKNMKVNNELSSYRYGAVLHIRNHNQNQSRSIHKINAESWIDFASSQMDRQGLARLLKENKDAESIAVFNIPYSKTIVERHIAKSLADDHDGDDTHSSIDGVAWISAAREKASQCPSLDVHDLVQLAEDAGFRVEVSWARQRSQNGALDVFFHHFQPTENESRALVDFPTDYKGQQARSLTNRPLQRVESRRIEAQVREQLQVLLPAYMIPARIVVLQNMPLNTSGKVDRKELTLRAKVTAARTPSSELVAPRDSIEAIICKEFKDVLGVEVGITDNFFNVGGHSLLATKLAARLSRQLNAQIAVKDIFDRPVIADLAATIQQDTTEHNPILPTSYTGPVEQSFAQGRLWFLDQLNVGATWYLMPFAVRLRGPLVVSALAAALLALEERHETLRTTFIEQEGIGMQVIHPFAPKELRVIDVSGEEESTIQKILEKEQTTPFNLASEPGFRLALLKTGEDEHILSTVMHHAISDGWSVDIFQQEIGQFYSAILRGHDPLAQIAPLSIQYRDFATWQRQIFQVAEHRRQLAYWTKQLADNKPAELLTDFKRPPMLSGRAGEIPVVVDGLIYEKLQDFCRIRQVTAFTVLLAAFRAAHYRMTGTEDATIGTPIANRNRPELEGLIGFFVNTQCMRITVDVEDSFETLVHQVRETTLAAHANQDVPFEQIVSNILPGSSDTSRNPLVQLMFALHSQQNLGKVRLEGIEEEIISIAETTRFDIEFHLYQEAERLNGSIVYAADLFVPETIQSVITIFQGILQKGLGEPDMPVASMALDGGLESLRSTGLLHPQQTDYPCDASVVQIFKQQVAVNPDVIAVRDESTRLSYADLDRKSDQVACWLSRRGIAPETFVAILAPRSCETIVAILGVLKANLAYLPLDVNVPASRLEAILSEVSGSMLVLVGAETPIPEGMAEAETIRITEILADAKTDDINGLAASQPTAASLAYVIFTSGSTGRPKGVMVEHRGIVRLTKQTNITSKLPESFHMAHISNLAFDASVWEVFTTLLNGGTLVCIDYFTLLESTALEKVFFDQRVNVALLPPALLKQCLDNSPALVKTLSVLYIGGDRLDASDAAKARGLVQTQAFNAYGPTENTVMSTIYPIAEDPFINGVPIGHAVSNSGAFVMDQNQQITPPGAMGELIVTGDGLARGYTTSSLNTGRFINVDIDGEQVRAYRTGDRVRYRPKDLQIEFFGRIDHQVKIRGHRIEPAEVEYALLSHDLVTDAAVVTHSQENQDLEMVGFVAARVADVREDESSNQVQEWQTHFDSIAYADITTIDQQSLGRDFMSWTSMYDGSLIKKSQMQEWLDDTMRSLLDSQPPGHVLEVGTGTGMVLFNLGREGGLQSYVGLEPSPSATAFVNKAAKSFPGLEDRIRVEVGTATDIDRLGDDLHAGLVVVNSVAQYFPSQDYLAQLVRDLTKVPGVERIFFGDMRSHAINRDFLVARAVHALGDKATKAEIQREVVRMEESEDELLVDPAFFTSLTTQVENIKHVEILPKRMRATNELSSYRYAAVLHVNDLAKPAHKVSPGAWVDFAATKMDRDALIRLLRGTKISDHIAIANIPNSKTIVERTICESVYDLGGDAKDSNDRVSWLSAARSNAVKVASLSAIDLVDIAQEAGFRVEISCARQWSQNGALDAVFHHLGPSPQSSHVLIDFLTDHQGRPEEALTNHPLHRAQSRRVERQIRERLQTLLPAYMIPAQIMVLDKLPLNANGKVDRKQLTQRAQTVPKAKQVSAPVAPRTEIERVLCQEFSDVLGVDIGIMENFFDLGGHSLMATKLAARISRRLETHVSVKEIFDHPRVCDLVLIVQQGSAPHDPIVSTKYTGPVPQSFAQGRLWFLDQLNFGATWYLMPLAVRLRGAMNVHALTAALLALERRHELLRTTFYEQNGVGMQKVNPVVTETLRIIDLSNGDGDYLPTLKKEQTAPFHLETEPGWRVALLRLGPGDYILSVVMHHIISDGWSVDVLFQELGQFYSTAVKGHDPLSQTTPLPIHYRDFALWQKKPTQESEHERQLQYWVEQLVDSAPAELLTDLPRPSILSGQAGEMSVTIEGALYKNLEEFCRVHRVTSFVVLLAALRAAHYRLTGSEDATIGTPIANRNRPELEQIIGFFVNTQCIRITVNEDETFESLVQQVRSTATAAFAHQDVPFEKIVSTLLPGSRDASRNPLVQLMFAVHSQKNLGELKLENAHSEVVPTEITTRFDLEFHLFQQDDKLEGSILYSTDLFEAVSVQSLLSVFQEILRRGLNGPDVPISTLPLQDGIVDLQRQGLLDVQKTEYPRDSSVVDVFHEQVSINPDSIALIHGSEKLSYAQLDRESDRVARWLRHRSFSSDTLIAVLAPRSCETIIAFLGILKANLAYLPLDVKAPAARIDAIVSSLPGNKLILLGANVTPPKLQEAAIDFVPIRDTFTTLTDGTLQDGPTIERPSAQSLAYAMFTSGSTGRPKGVMVQHRNIVRLVKNSNVVAKQPAAARIAHISNLAFDASSWEIYAPLLNGGAIVCADYFTTIDPQALQETFQEHEIRGAMLPPSLLKQCLVQAPDMISRLDILFAAGDRFSSVDALQAQRLVGSGVFNAYGPTENTILSTIYNVAENDSFVNGVPIGSAVSNSGAYIMDKNQQLVPAGVMGELVVTGDGLARGYMDPKLDADRFIQLTVNGSEQVRAYRTGDRVRYRPKDFQIEFFGRMDQQIKIRGHRIEPAEVEQAFLNDGFVEDVAIVIRTPENQEPEMVAFVTAKGDNSAREEEATTQIEGWEAHFEGGAYANIEEIESEALGYDFMGWTSMYDGTEIDKDEMREWLNDTMRSLLDGKPAGRVLEVGTGTGMIMFNLGRSQGLERYIGLEPAPSAAEFVNNAAKSFPGLAGRAEVHVGTAADVGTLQGLTSDMAVINSVAQYFPTPEYLAETIKSLVQVPGMKRIYLGDMRSWAMNRDFAAARAAYSLADNASKDRVRQKMMELEEKEEELLVDPAFFTALASQLQDRIQHVEILPKRMKATNELSSYRYAAVLHISDEPLPIYKIDPEAWINFEGSRLTREALAQVLKENENAESVAISNIPYSKTVVERHIVRSLDQEDANAPEESMDGSDWISAVRTRAQQCHTLSASDLFDIAEDAGFRVEVSWARQHSQHGALDAVFHHLKPATEDSRVLIKFPTDHQGRPLKSLTNQPLLPAQSRRAELLIREGLQTLLPPYMIPSQITLIDRMPLNANGKVDRRELARRAKITQKSKPVEDIVPPRNSVEATVCKGFTDVLGVEVGITDNFFNLGGHSLMATKLAARLGRQLNTRISVRDVFDQPVVADLAAVIQRNSAPHEPIKPADYTGPVPQSFAQGRLWFLDQLNVGATWYLMPLGIRLHGSLRVDALATAISALEQRHEPLRTTFHEEDGVGVQVVQDHRPKDLRIIDLSTQPKDAYLAVLKHEQTTLFDLATEPGWRVALIRLGEEEHILSIVMHHIISDGWSVEVLFDEMHRFYSSALRQQDPMEQILPLPIQYRDFAAWQKTEEQVAEHQRQLDYWTEHLADSTPAELLTDLPRPSILSGRANELPLTIEGRLHDKLRAFCRVHQATPFVILLAALRAAHYRLTGAEDATLGTPIANRNRPELENMIGFFVNTQCMRIAIEENDNFESLVRRVRSTATSAFANQDVPFESIVSSLLPGSRDASRNPLVQVILAVHSQQDLGKLTLEGLRDEAVDSAISTRFDVEFHLFEHADRLSGSVLYAKELFKLRTIESVVSVFLETLRRALDQPLTPLAVLPLTDGVGEIASKGLLDVPRTDYPRDANIVEVFQQHVRATPDAIAVKDATSILTYAQLDQQSDRLAIWLSRRHMMPETLVGVLAPRSCETIIAMFGIMKANLAYLPLDINSPAARLRSILSAVDGNKLVLLGSGVTAPEQENPEVEAVGIQEILAGTGLDKTQGSNARPSATSLAYVIFTSGSTGKPKGVMVEHRSVTRLAKPSNVISKLPQGARVAHLANIAFDASIWEIATTLLNGATLVCLDYHTVLDCRTLKEVFERESITVVTLMPALLKQCVAEIPETLAHLDLLYTGGDRVGGHDAMRARSLVKIGMFSGYGPTENTVISTIYEVDADEMFVNGVPIGKTVSNSGAYVMDRNQQLVPSGVVGELVVTGDGLARGYTDPSLNKNRFIYITVNGESIRAYRTGDRVRYRPHDLQIEFFGRMDQQVKIRGHRIEPGEVESALLSHNSVQDAAVVICAPADQDSGAEMVAFVAARNTEDEDTQEEEAVDQVQGWETHFETAAYSEVKDIRQSEVGNDFMGWTSMYDGSEIDKTDMHEWLNDTMRMILDAREPGHVLEIGTGTGMVMFNLAKCPGLQGYVGFEPSKSAAQFVNDAAQSFPALKDGRSIVHVGTATDINKAGPIQPRLVVINSVAQYFPTPEYLFRVVEALVQIPSVERIVFGDMRTNAINRDFVASRALHTLGEKANKRLVRQMIYELEANEEELLTDPAFFTSLRTRLGEKIKHVEILPKTMKATNELSKYRYAAVLHVRGSREQSTIHQVSPNAWIDFAADGLDRQTLINLLKEHKDAGTVAIGNIPYSKTIVERFVNKSLSEDDMEEGQNSLDGSAWVAAVRMAAQSCPSLDAMDVKEIAQEAGYQVEVSWARQWSQNGALDAIFHHFEPPKEGARTLIEFPTDYEGRNVNTLTNRPLNSIQSRRLGTQIREKLQTLLPPYMIPSRIMVLDQMPVNNNGKIDRKELVRRAIVAPKPRSAATRVAPRNEIEAILRDEFEDVLGTEVSVLDNFFDLGGHSLMATKLAARVSRRLDAHISIKDVFDQPVLADLAASIQRESAPHEPIPQRPYTGPAEQSFAQGRLWFLDQLNLGATWYLMPLAIRIRGQLRVAALSAALFALERRHETLRTTFEESDGVGVQIVGEARNSDLRVHDVSTGDDGEYLEVLRREQTVPFDLSSEPGWRVCLVKTGEEDHVLSIVMHHIIYDGWSVDILRGELGQFYSAALRGQDPLLHANPLPIQYRDFAAWQREAKQVEEHQRQLGYWSKQLVDSTPAELLTDLPRPSILSGRAGSVDVTIEGSVYGALQSFCRTRSVTTFVVLLTVFRIAHFRLTAVDDATIGTPIANRNRPELETLVGCFVNTQCMRISIADDDNFEGLVRQVRNVATAAYANQDVPFERIVSALVPGSRNTSRNPLVQLMFAVQSVEDYDQVRLEGLESVMMPGEASTRFDMEFHLVPGDQKLTGSVLYSSDLFEQGTIQNFVDIFQECLRSVLDQPLTPISVLPFSNAISNLESLDLLEMPTSDYPRDRTVVDLFREQAAICPDSIAVKDSSSQLTYAQLDEQSDRVAAWLHERHMPAESLVGVLSPRSCETIIAYFGIMKANLAYLPLDVYAPDARLAAILDTVEGERLLLLGAGVPQPGIQIPRLSTAYIAEALSHATTVDVTSIPQPSATSLAYVIFTSGSTGKPKGVMIEHRGIVRLVRDTNVNVFPESGSALPVSHFSNLAWDAATWEIYTAVLNGGTVVCIDRDTMLDIAALNSTFRKENVRAAFFTPAFLKQCLAETPELVANLEILHTAGDRLDPGDANLAGKTAKGGIFNVLGHTENTAYSTFYPVVGEETFVNGVPVGRGISNSHAYIIDRHQKLVPAGVMGELILTGDGVARGYTDSALNKDRFVYIDINGKSTWSYRTGDKARYRPRDGQLEFFGRMDQMVKIRGVRIEPGEVELTLLDHKSVLAATVVVRRPPNGDPEMIAFITIDAEDDVQTHKAIYKHLQGILPAYMIPSHLVILDQMPVTDNGKVDRKDLALRAQTVQKRRSTAARVPPRDEVEAVLCEEYSNLLEVEVGITDGFFDLGGHSLLATKLAARLSRQLNTRVSVKDVFDQPILADLADIIRRGSHRHDPIPATPYTGPVEQSFAQGRLWFLEQLNLGASWYLMPFAIRMRGPLQTKALAVALNALVHRHEALRTTFEDHDGVGVQVIQPKSSQDLRIIDLSDAVDDTAYLAALKREQTTAFDLTSEPGWRVSLLRLGDDDYILSIVMHHIISDGWTVDVLRQELGQFYSAAIRGQEPLSQAKSLPIQYRDFAVWQRQENQIKEQAKQLKYWSQQLADSTPCEFLTDLPRPSILSGEADAVPMVIDGTVYQLLTDFCRTHQVTSFSVLLAAFRTAHYRLTGTLDATVGTPIANRNRPELEGLIGFFVNTQCMRMAISETETFESLVQQVRLTTTEAFANQDVPFEQIVSTLLPGSRDTSRNPLVQVMFALQSQQDLGRIQLEGMTDEALETPLSTRLDLEVHLFQEVGKLSGSLLYSTDLFEVETIRGIVDVFLEILRRGLEQPKQRLMAMPITDGITKLRDQGLLTVAKPAYPRESSVIDLFRQQVAAAPDAIAVWDSSSTLTYADLDGQSNKLAHWLCQRNMAPETLVAVFAPRSCLTIVAFLGVLKANLAYLPLDVNAPAARIEAILSAVPGHKLVLVQAHGPELGLTMADTELVQIDEALASSSSGDHEQIHASGPTATSLAYVMFTSGSTGKPKGVMIDHRSIIRLVKNSDVVATLPTPVRMANVSNLAFDISVQEIYTALLNGGTLVCLDYLTLLDSKILYNVFVEAQVNAAMFTPVLLKQCLGNMPAIISRLSVLFNVGDRLDAHDAVAASGLIQDAVYNAYGPTENGMQSTMYKVDVNEPFVNGVPIGRSITNSGAYVMDGNQQLVSPGVMGEIVVTGDGLARGYTDSALDEDRFVHVTIDGEENIKAYRTGDRVRYRPKDFEIEFFGRMDQQVKIRGHRIEPAEVEHALLGHDLVHDAAVVLRKPANQEPEMIAFITSQEDETIEQHESNKQVQGWGEHFDVSRYADIKDLDTSTFGHDFLGWTSMYDGVDIPVNEMKEWLDETTASLLDNRPPGHILEIGAGTGMILSNLGKVDGLQKYVGLDPAPSAAIFVNEAVKSLPSLAGKARVLVGTALDIGSLDKNEIQPELVVINSVAQYFPTSEYLIKVVKAVVEVPSVKRVFFGDIRSQALNRDFLAARAVRALGDNASKEQIREKIAELEESEEELLVDPAFFVSLRSQLPNIKHVEVLPKLMKATNELSSYRYAAVLHISHNEEEQLLIQDIDPTAWVDFAATQKDSQGLRNLLQQGRDDVMIAVGNIPYSKTIVERHIMNSLDQDHVNSLDGTSWISDARSAAAICTSFDAPALTQLAKEEGFRVELSWARQRSQNGALDAVFHRLATDANCERSRVLVHFPTDHQGRQLRTLTNRPLQRAQSRRIESQVFEALQTALPAYMIPSRIIVLPQMPTNANGKVDRKQLARRAQVVAKRKAVSARVAPRNDTEIVLCEEYADILGTEVGITDNFFDMGGHSLMATKLAARLSRRLDTRVTVKEVFDKPVLADLAASIEQGSTPHLPIASSVYSGPVEQSYAQGRLWFLDQFNLNATWYHMSLAMRLLGPLNMDALDVALRALEQRHETLRTTFEAQKDIGVQVVHEAGMKRLKVLDLSDKNEKEHMAVLENEQMRPFTLASEPGWKGHLARLGPTEYILSLVMHHMFSDGWSVDILRQELGQFYSAALRGRDPLSQVKPLPIQYRDFAAWQKEAAQVAEHERQLAYWENQLADSTPGELLTDFPRPQFLSGKAGVIPVTIEGPVYEKLLKFSKERQVTLFSVLLTAFRATHFRLTGAEDATIGTPIANRNRPELEHIIGFFVNTQCMRLLLDTGSTFESLVQHVRSVATDAYSNQDIPFERIVSALLPGSRDASRSPLIQLMFALHSQPDLGNITLEGLEHERLPTSVATRFDMEFHLFQEPNKLSGSILFADELFQPETINSVVTVFQEILRRGLDQPQVSISTMPLTDGLIDLEKLGLLEIESSNFPRDYSVVDVFRQQVAANPNAPAVVDSETSMSYTSLDQKSEQIAAWLHAQGLRPESLICVMAPRSFETIVSLFGILKAGYAYLPLDVNSPAARIQPILSEVEGKRLVLLGSGIDMPQSDRMDVETARIQDILTNTKVERSDPMSRPSATSLAYVIFTSGSTGRPKGVMIEHRNILRLVKQSNVTSQLPQDLRMAHISNLAFDASIWEIFTAILNGGALICIDYFTLLDSQALRTTFEKARVNATLFAPALLKECLNHAPTLFEDLKVLYIGGDRLDATDAAKIQALVKGTVYNAYGPTENTVMSTIYRLTDGESYANGVPIGNAVSSSGAYIMDQKQRLVPPGVMGELVVSGDGLARGYTNSTLNADRFVDIVINDQKARAYRTGDRTRYRPKDGSIEFFGRMDQQVKIRGHRVEPAEVEQAMLGNKAIHDAAVVVQAVDGQETEMIGFVSMASDRFSEGEEEITNQVQEWEDHFESTAYAGIEAIDQATLGRDFTSWTSMYNGNLIDKAEMEEWLDDTMQSLLDKEDARPCAEIGTGTGMVLFNLPKNDGLESYVGIEPSRSAALFVDKAAQDFPGLQGKTQILVGTAEDIKLVKDFHPDVVVINSVAQYFPSRSYLVQIASELIHMTSVKTIFFGDMRSWATNRDFLVSRALYTLGDKATKDQIRQEVARLEENEDELLVDPAFFTSLTSQWPGKVKHVEILPKRMRTSNELSSYRYAAVLHICRDGEGRNRYGRRVHSVEENAWIDFASSGMDRHALVQMLDERRDAKTVAIGNIPHSNTINERHFTTSLDTEGEGIAQDSLDGSAWQSATKAMAARCPCLSVTELVEIGQAAGFRVEVSWARQRSQHGALDVVFHHLEDDRVGRVLINFPTDFERLPPSTGLTSRPLQRIQNRRFESQIREQLQTLLPPYMVPSRIVVLERMPLNANSKVDRKELARKARTLQTIKPSATRVAPRNDIEAVLCDEFQAVLGVTVGVMDNFFELGGHSLMATKLAARLSRRLDTRVSVKDIFNQPILQDLADVVQTGSAPHEAIPSTPYSGPVEQSFSQGRLWFLDQLNLNASWYHMPLASRLRGPLRIEALQSALATIEARHESLRTTFEEQDGVPVQIVRAARNKQLRIIDVSGTEDAYLAALKQEQDAAFDLTAEPGWRVALLRLGPDDHVLSIVMHHIISDGWSVDILRQELGQLYSNASSQPAPLPIQYRDFAIWQKQDSQIAEHQKQLNYWKRQLVNSKPAELLADFTRPKALSGDADVIPIEIDDQVYQNLRSFCRARHVTSFVALLAAFRAAHYRLTGAEDATIGSPIANRNRPELEGLIGCFVNTQCLRIPVKSEDTFDTLVKQARETATEAQDNQDVPFERIVSSMVASSRDTSRNPLVQVMFAVHSQHDLGNIRLEGVEGKPVSMAASTRFDAEMHLFEDQGMLGGNVVFSKDLFESETIRSVVAVFQETLRRGLANPHANLATLPLTDGLPSLRSLCLQVNQPDYPRDASVIDVFREQVASIPKSIAVIDASSQLTYTELDERSSQLATWLRRQVTVPEELVGVLAPRSCETIIAFLGIIKANLAYLPLDVNAPAGRIETILSSLPGNRLILLGSDTQAVKLHANSVRFTRISDALVESGSPPTEELSTRPTAQSLAYVMFTSGSTGVPKGVMVEHRGITRLVKNSNVVAKQPAAAAIAHLSNIAFDASSWEIYAPLLNGGTVVCIDYYTTIDIKALEAVFKQHHIRGAMLPPALLKQCLVSAPTMISSLEILFAAGDRLSSQDAILARRAVGSGVYNAYGPTENTVLSTIHNIGENEAFSNGVPIGNAVSNSGAFVMDQNQQLVSAGVIGELVVTGDGLARGYTDSKLRVDRFIYITLDGNRVRAYRTGDRVRHRPKDGQIEFFGRMDQQIKIRGHRIEPAEVEQALARDPAISDSAVITQLTDEEEPELVAFFSLKGNANGTNGVNGVSDQEKIDGDEQHALLMENKIRHNLQALLPTYMIPSRIIHVDQLPVNANGKIDRNELAVRAQATPRTSSVSTYVAPRNDIETIICKEFADILSVRVGITDNFFDLGGHSLIATKLAARLSRRLDTRVSVRDVFDTPVVGQLAASIQQGSTPHEAIPALSHSGPVQQSFAQGRLWFLDRFNLNAAWYIMPFGVRLRGPLRVDALQTALRALEERHELLRTTFEEQDGVGMQIVHSPRMRDICVVDISGANEDLAKLKEEQQAPFNLSTEVAWRVALFKAGENHHILSIVMHHIISDGWSVDIFQQELAQFYSVAVRGHDPLSQVKPLPIHYRDFAVWQRQDKQVAVHESQLQYWIEQLADSTPAEILSDFNRPEVLSGEAGTVPIVIEDEVYEKLSLFCRNHQVTSFVVLLAAFRVAHYRLTGAEDATIGTPIANRNRPELEDLIGFFVNTQCMRIALEEHDNFLSVVRRVRSTAASAFENQDVPFERLVSALLPGSRDASRNPLVQLMFVVHSQRNLGKLQLEGLEGEPTPYTATTRFDVEFHLFEQDKGLAGNVVFAADLFEAATIRSVVEVFHEILRRGLDQPDIAISTMPLVDGLAALNSRNLPAVEDIEPDFATEASVVDVFQTQVVANPDALAVTDTSTKLTYAELDQQSDHVAAWLSKQKLPAESIVVVLAPRSSETIVACIGILKANLAYLPMDSNVPEARRQAILSEIPGEKFVLLGAGVPIPDNKTADVRMVFISDIVASKTDKSYSPGTRPSASSLAYVIFTSGSTGRPKGVMVEHRGVISLVKQNASRIPQSLRMAHVSNLAFDASVWEIFTTLLNGGTLFCISYFTVLDSKALSAAFSDHRINITLLPPALLKQCLADAPSVLSSLESLYIGGDRLDGADATKVKDLVKGKAYNAYGPTENSVMSTIYTIEHETFANGVPIGTSLGPKSKAYIMDQDQQLVPAGVMGELVVAGDGLARGYTDPSLNTGRFIHITIDGKQVQAYRTGDRVRYRPRDYQIEFFGRLDQQIKIRGHRIEPAEVEQALLSDSSINDAVVVSAQNKEGLEMVGYITTQAAQSVDKEEASNKVQEWEAHFDSTAYANIGGIDRDALGQDFLSWTSMYDGSLIPREEMQEWLNDTMRSLLDNQPPGKVLEIGTGTGMVLFNLGKVEGLQSYAGLEPSRSVTAWVNKAIETFPSLAGSARVHVGTAEDISSIDGLRSDLVVINSVAQYFPSREYLAELTANLIRLPGVKRIFFGDMRTYATNKDFLVARAVHTLGSNASKAMVRQQVAKLEDDEEELLVDPAFFTSLSDQFPDEIKHVEILPKRMAATNELSSYRYAAVIHVGGHQMPNGEDEDKQWAVKDINPKAWVDFAGTRMDRQALLQLLQDRQRGDDVVAVSNIPYSKTIMERHLSQSLDDDEDGTSAVDGTAWISRTQSRAKECPALSVADLIEIGKGIGFEVEASWARQHSQRGGLDAVFHRFEPPRHSGHVMFRFPTEHKGRSSSSLTNRPLHLLQSRRLEAKVRERLQSLLPPYMIPSRITLLDQMPLTSNGKVDRKKLARQARVIPRSAASTLDFVAPRTEIEVVLCEEFTDLLGVKVGITDNFFELGGHSLLATKLSARLSRRLDAGITVKQVFDQPVLADLAASILQGSSRHRSIPSLPYEGPVEQSFAQGRLWFLDQFNIDALWYLIPFALRMRGPLQVDALAAALVALEERHESLRTTFEERDGVGIQVVQPLRTTKDIRIIDVSGMRDDDAYLEPLQKEQQTPFDLASEPGWRVALLKLGKDDHILSIVMHHIISDGWSTEVLQRELGQFYLAAKSGKAPLSQVAPLPIQYRDFAVWQRQEEQVAESQRQLDYWKKQLADSSPAELLADYTRPNVLSGEAGSVSFVINDSVYKSLVSFCRSRQVTTFTTLLAAFRAAHYRMTGSDDATIGTPIANRNRPELENLIGCFVNTQCMRITIGDDETFESLVQQVRSTTATAFENQDVPFERIVSTLSAGSRDTSRNPLVQLLFAVHSQQGLGRIQLDGVVDEPVLSTVSTRFDLEFHAFQEADRLNGSVMFATDLFQPETIQGFVAVVEEVLQRGLEQPQSPIATMPLAEGIAQLRDAGALQMPKSDYPRNASLVDVFQQQAMASPSTVAVTDSTSKLTYAELDRLSDQAASYLRRQQLPAETMVAVLAPRSCETIIAFLAILKANLAYMPLDVNTPSARMEAIISSVPGRRLILVGSGVRHADINVPNAKTMLISDTVTGTDAIGTPEPLVVRPSATSLAYVIFTSGSTGKPKGVMVEHRAIMRLVKDSNVVTHMPPATRMAHVTNIAFDVSLFEMCATLLNGGTLVCIDYLTLLDSTMLRETFEREQVRAAIFPPALLRQCLVNMPDAIGMLEAVYVAGDRFHSRDARATQALAGPRVYNAYGPTENAILSTIYNIDKHDPYVNGVPIGSAVSNSGAYVMDRNQQLLPPGVMGELVVTGEGVARGYTDASLDTDRFVTVTIDGQRQRAYRTGDRVRYRPKGFQIEFFGRLDQQAKIRGHRVELGEVEHALLSENSVTDAAVVLRTMEEEDPQLVAFVTTDHEYRSGSSNEEEDPYATQAAGDMRKRLRSLLPYYMVPSRVTILRQMPLNANGKVDRKDLARRAQMTPTASSSGPVHVAPRNETEAAICDEFETILGVKVGITDNFFELGGHSLLATKLAARLSRRMGLRISVKDLFDDPVPVSLAGKLEQQQGFSGEDESSTVGIVPFQLLPAEMSREIIQRDVVPQIENGHSTPLDMYPATQTQIFFLHDKATGHPATPPLFSLDFPETADCRRLASACAALVQHFDIFRTVFVSRGGRFYQVVLAHLDVPVEVIETEQELDEVALALHEADKQQPLRLGRAMLRIAILKRPGAKMRLVLRMSHSLYDGLSLEHIVNALHALYSDKHLAQAPKFGLYMHHMASRRAEGYNFWRSILQGSSMTSLKRSVGALEAMTPSAGTWQTSKSIRIPPAALKNGITQATLFTAAVSLLLAKHTKSTDVVFGRVVSGRQDLSINCQDIVGPCINEVPVRVRIDEGDDMGGLLRAIQDQYTSSFRHETLGLQEVKENCTDWTDATKEFSCCIAFQNLNLHPEAEIEGQQIRLEGLPAKDQARQANGHAPNGTNGTNGTNGTNGANGTNGTNGTNGTHANGINGSNGVNGRDSNVVSAAGDQAPVHDLDIVGIPEPDGSVKIGIGASRQILGEKVVGSMLNELCETMLALSRT.

Positions S34–T463 are condensation 1. Residues S513–V918 form an adenylation 1 region. In terms of domain architecture, Carrier 1 spans A1026–S1100. S1060 carries the O-(pantetheine 4'-phosphoryl)serine modification. The interval S1118–T1549 is condensation 2. The tract at residues S1599–V2004 is adenylation 2. The interval S2067 to V2251 is methyltransferase (M) domain 1. The Carrier 2 domain occupies A2524–T2598. The residue at position 2558 (S2558) is an O-(pantetheine 4'-phosphoryl)serine. Residues S2616–A3044 form a condensation 3 region. An adenylation 3 region spans residues S3096–V3498. The tract at residues S3562 to F3749 is methyltransferase (M) domain 2. A Carrier 3 domain is found at A4011 to S4085. S4045 is subject to O-(pantetheine 4'-phosphoryl)serine. The condensation 4 stretch occupies residues V4100–P4530. The adenylation 4 stretch occupies residues S4582 to V4986. Residues T5052 to T5241 form a methyltransferase (M) domain 3 region. A Carrier 4 domain is found at P5503–S5577. S5537 is subject to O-(pantetheine 4'-phosphoryl)serine. The interval V5592 to P6023 is condensation 5. The adenylation 5 stretch occupies residues T6075–V6478. The methyltransferase (M) domain 4 stretch occupies residues W6545 to L6729. The region spanning A7000–S7074 is the Carrier 5 domain. S7034 bears the O-(pantetheine 4'-phosphoryl)serine mark. The tract at residues S7092–S7517 is condensation 6. The segment at T7572–V7976 is adenylation 6. The 75-residue stretch at P8060 to S8134 folds into the Carrier 6 domain. At S8094 the chain carries O-(pantetheine 4'-phosphoryl)serine. The tract at residues S8152–I8582 is condensation 7. The adenylation 7 stretch occupies residues T8633 to V9038. The interval P9111–D9288 is methyltransferase (M) domain 5. A Carrier 7 domain is found at A9555–S9629. Residue S9589 is modified to O-(pantetheine 4'-phosphoryl)serine. Residues S9647–T10077 form a condensation 8 region. The tract at residues S10127–V10529 is adenylation 8. Residues R10588–L10768 form a methyltransferase (M) domain 6 region. Residues A11052–S11126 enclose the Carrier 8 domain. At S11086 the chain carries O-(pantetheine 4'-phosphoryl)serine. The tract at residues S11144 to T11567 is condensation 9. Residues T11616–V12019 form an adenylation 9 region. The region spanning A12124–S12198 is the Carrier 9 domain. An O-(pantetheine 4'-phosphoryl)serine modification is found at S12158. Residues S12216–D12645 form a condensation 10 region. The tract at residues T12696–V13096 is adenylation 10. The tract at residues Y13162 to D13343 is methyltransferase (M) domain 7. The region spanning A13620 to S13694 is the Carrier 10 domain. Position 13654 is an O-(pantetheine 4'-phosphoryl)serine (S13654). The condensation 11 stretch occupies residues E13710–L14143. The tract at residues T14194 to V14598 is adenylation 11. One can recognise a Carrier 11 domain in the interval A14695 to Q14769. S14729 is modified (O-(pantetheine 4'-phosphoryl)serine). A condensation 12 region spans residues D14814 to Q15158. The segment at Q15169–V15224 is disordered. Low complexity predominate over residues A15173–N15211. Over residues S15213 to V15224 the composition is skewed to polar residues.

The protein belongs to the NRP synthetase family. Pantetheine 4'-phosphate serves as cofactor.

Functionally, nonribosomal peptide synthetase; part of the gene cluster that mediates the biosynthesis of the cycloundecapeptide cyclosporin A (CsA), a compound with antifungal activity used as an immunosuppressant drug. Cyclosporin A contains three non-proteinogenic amino acids: D-alanine, alpha-amino butyric acid and the unusual amino acid (4R)-4-[(E)-2-butenyl]-4-methyl-l-threonine (Bmt). The nonribosomal peptide synthetase (NRPS) catalyzes the elongation and cyclization of the undecapeptide chain. SimA contains 11 modules responsible for sequential uptake of substrates and chain elongation. In addition to the core condensation-adenylation-thiolation (C-A-T) domains present in each module, seven modules contain an additional N-methylation (M) domain (modules 2, 3, 4, 5, 7, 8, and 10). The terminal C domain (C12 or Ct) is implicated in cyclization of the peptidyl chains to form CsA. The first module (A1) takes up D-Ala which is provided by the alanine racemase simB. The A2, A3, A8, and A10 domains have the same substrate-specific signature for recognition of leucine residues. The unusual amino acid (4R)-4-[(E)-2-butenyl]-4-methyl-l-threonine (Bmt) is recognized by the fifth module (A5). The A11 domain recognizes L-Ala. The PKS simG mediates the biosynthesis of 3R-hydroxyl-4R-methyl-6E-octenoic acid from acetyl coenzyme A (acetyl-CoA), malonyl-CoA, and S-adenosylmethionine, and 3R-hydroxyl-4R-methyl-6E-octenoic acid is then be repeatedly oxidized by simI to 3R-hydroxy-4R-methyl-2-keto-6E-octenoic acid. The latter is likely converted to Bmt through the action of the aminotransferase SimJ. This chain is Cyclosporin synthetase simA, found in Tolypocladium inflatum (Cyclosporin fungus).